The chain runs to 441 residues: Glutamate--tRNA ligase 1 (441 aa).

Residues 7–17 carry the 'HIGH' region motif; it reads PSPTGYMHIGN. The 'KMSKS' region motif lies at 236–240; the sequence is KMSKR. Residue Lys239 coordinates ATP.

Belongs to the class-I aminoacyl-tRNA synthetase family. Glutamate--tRNA ligase type 1 subfamily. In terms of assembly, monomer.

It localises to the cytoplasm. The enzyme catalyses tRNA(Glu) + L-glutamate + ATP = L-glutamyl-tRNA(Glu) + AMP + diphosphate. In terms of biological role, catalyzes the attachment of glutamate to tRNA(Glu) in a two-step reaction: glutamate is first activated by ATP to form Glu-AMP and then transferred to the acceptor end of tRNA(Glu). The polypeptide is Glutamate--tRNA ligase 1 (Anaplasma marginale (strain St. Maries)).